We begin with the raw amino-acid sequence, 1527 residues long: ATP-binding cassette sub-family C member 3 (1527 aa).

Residues 1-32 are Extracellular-facing; the sequence is MDALCGSGELGSKFWDSNLSVHTENPDLTPCF. The N-linked (GlcNAc...) asparagine glycan is linked to N18. A helical transmembrane segment spans residues 33 to 53; that stretch reads QNSLLAWVPCIYLWVALPCYL. The Cytoplasmic segment spans residues 54–73; the sequence is LYLRHHCRGYIILSHLSKLK. A helical transmembrane segment spans residues 74–94; the sequence is MVLGVLLWCVSWADLFYSFHG. Residues 95 to 99 are Extracellular-facing; it reads LVHGR. The chain crosses the membrane as a helical span at residues 100–120; sequence APAPVFFVTPLVVGVTMLLAT. Topologically, residues 121–132 are cytoplasmic; that stretch reads LLIQYERLQGVQ. A helical membrane pass occupies residues 133–153; that stretch reads SSGVLIIFWFLCVVCAIVPFR. At 154 to 171 the chain is on the extracellular side; sequence SKILLAKAEGEISDPFRF. A helical transmembrane segment spans residues 172–192; sequence TTFYIHFALVLSALILACFRE. Over 193-302 the chain is Cytoplasmic; that stretch reads KPPFFSAKNV…RPRKPSFLKA (110 aa). The helical transmembrane segment at 303-323 threads the bilayer; it reads LLATFGSSFLISACFKLIQDL. An ABC transmembrane type-1 1 domain is found at 311-594; it reads FLISACFKLI…LPQLISNLTQ (284 aa). Over 324–349 the chain is Extracellular; that stretch reads LSFINPQLLSILIRFISNPMAPSWWG. Residues 350-370 traverse the membrane as a helical segment; the sequence is FLVAGLMFLCSMMQSLILQHY. Residues 371-426 are Cytoplasmic-facing; the sequence is YHYIFVTGVKFRTGIMGVIYRKALVITNSVKRASTVGEIVNLMSVDAQRFMDLAPF. Residues 427 to 447 traverse the membrane as a helical segment; sequence LNLLWSAPLQIILAIYFLWQN. Residues 448-450 are Extracellular-facing; it reads LGP. A helical transmembrane segment spans residues 451 to 471; that stretch reads SVLAGVAFMVLLIPLNGAVAV. Over 472 to 533 the chain is Cytoplasmic; it reads KMRAFQVKQM…LLRTAAYLHT (62 aa). Residues 534-554 form a helical membrane-spanning segment; it reads TTTFTWMCSPFLVTLITLWVY. At 555-576 the chain is on the extracellular side; sequence VYVDPNNVLDAEKAFVSVSLFN. Residues 577–597 traverse the membrane as a helical segment; sequence ILRLPLNMLPQLISNLTQASV. Residues 598–963 lie on the Cytoplasmic side of the membrane; that stretch reads SLKRIQQFLS…VELSVFWDYA (366 aa). Residues 629 to 851 form the ABC transporter 1 domain; it reads IHSGTFTWAQ…NGSFANFLCN (223 aa). Residue 661–668 participates in ATP binding; that stretch reads GPVGCGKS. 2 positions are modified to phosphoserine: S908 and S911. The tract at residues 910–932 is disordered; the sequence is LSSDGEGQGRPVPRRHLGPSEKV. Residues 964-984 traverse the membrane as a helical segment; sequence KAVGLCTTLAICLLYVGQSAA. In terms of domain architecture, ABC transmembrane type-1 2 spans 971 to 1252; sequence TLAICLLYVG…MIRMMSDLES (282 aa). Topologically, residues 985–1021 are extracellular; sequence AIGANVWLSAWTNDAMADSRQNNTSLRLGVYAALGIL. N-linked (GlcNAc...) asparagine glycosylation is found at N1006 and N1007. The chain crosses the membrane as a helical span at residues 1022–1042; that stretch reads QGFLVMLAAMAMAAGGIQAAR. Residues 1043-1085 are Cytoplasmic-facing; it reads VLHQALLHNKIRSPQSFFDTTPSGRILNCFSKDIYVVDEVLAP. Residues 1086–1106 traverse the membrane as a helical segment; the sequence is VILMLLNSFFNAISTLVVIMA. Position 1107 (S1107) is a topological domain, extracellular. Residues 1108–1128 traverse the membrane as a helical segment; sequence TPLFTVVILPLAVLYTLVQRF. Over 1129–1199 the chain is Cytoplasmic; the sequence is YAATSRQLKR…ISNRWLSIGV (71 aa). A helical membrane pass occupies residues 1200-1220; that stretch reads EFVGNCVVLFAALFAVIGRSS. Over 1221-1222 the chain is Extracellular; the sequence is LN. A helical membrane pass occupies residues 1223 to 1243; sequence PGLVGLSVSYSLQVTFALNWM. The Cytoplasmic portion of the chain corresponds to 1244–1527; sequence IRMMSDLESN…YGMARDAGLA (284 aa). An ABC transporter 2 domain is found at 1291–1523; sequence FRNYSVRYRP…RGIFYGMARD (233 aa). 1323-1330 serves as a coordination point for ATP; sequence GRTGAGKS.

It belongs to the ABC transporter superfamily. ABCC family. Conjugate transporter (TC 3.A.1.208) subfamily. Mainly expressed in the liver. Also expressed in small intestine, colon, prostate, testis, brain and at a lower level in the kidney. In testis, localized to peritubular myoid cells, Leydig cells, along the basal membrane of Sertoli cells and moderately in the adluminal compartment of the seminiferous tubules.

Its subcellular location is the basolateral cell membrane. It localises to the basal cell membrane. It catalyses the reaction taurocholate(in) + ATP + H2O = taurocholate(out) + ADP + phosphate + H(+). It carries out the reaction glycocholate(in) + ATP + H2O = glycocholate(out) + ADP + phosphate + H(+). The catalysed reaction is taurolithocholate 3-sulfate(in) + ATP + H2O = taurolithocholate 3-sulfate(out) + ADP + phosphate + H(+). The enzyme catalyses taurochenodeoxycholate 3-sulfate(in) + ATP + H2O = taurochenodeoxycholate 3-sulfate(out) + ADP + phosphate + H(+). It catalyses the reaction an S-substituted glutathione(in) + ATP + H2O = an S-substituted glutathione(out) + ADP + phosphate + H(+). It carries out the reaction ATP + H2O + xenobioticSide 1 = ADP + phosphate + xenobioticSide 2.. The catalysed reaction is 17beta-estradiol 17-O-(beta-D-glucuronate)(in) + ATP + H2O = 17beta-estradiol 17-O-(beta-D-glucuronate)(out) + ADP + phosphate + H(+). The enzyme catalyses dehydroepiandrosterone 3-sulfate(in) + ATP + H2O = dehydroepiandrosterone 3-sulfate(out) + ADP + phosphate + H(+). It catalyses the reaction leukotriene C4(in) + ATP + H2O = leukotriene C4(out) + ADP + phosphate + H(+). It carries out the reaction (4Z,15Z)-bilirubin IXalpha C8-beta-D-glucuronoside(in) + ATP + H2O = (4Z,15Z)-bilirubin IXalpha C8-beta-D-glucuronoside(out) + ADP + phosphate + H(+). The catalysed reaction is (4Z,15Z)-bilirubin IXalpha C8,C12-beta-D-bisglucuronoside(in) + ATP + H2O = (4Z,15Z)-bilirubin IXalpha C8,C12-beta-D-bisglucuronoside(out) + ADP + phosphate + H(+). Its function is as follows. ATP-dependent transporter of the ATP-binding cassette (ABC) family that binds and hydrolyzes ATP to enable active transport of various substrates including many drugs, toxicants and endogenous compound across cell membranes. Transports glucuronide conjugates such as bilirubin diglucuronide, estradiol-17-beta-o-glucuronide and GSH conjugates such as leukotriene C4 (LTC4). Transports also various bile salts (taurocholate, glycocholate, taurochenodeoxycholate-3-sulfate, taurolithocholate- 3-sulfate). Does not contribute substantially to bile salt physiology but provides an alternative route for the export of bile acids and glucuronides from cholestatic hepatocytes. May contribute to regulate the transport of organic compounds in testes across the blood-testis-barrier. Can confer resistance to various anticancer drugs, methotrexate, tenoposide and etoposide, by decreasing accumulation of these drugs in cells. This Homo sapiens (Human) protein is ATP-binding cassette sub-family C member 3.